The sequence spans 474 residues: Serine/threonine-protein kinase VRK3 (474 aa).

Residues 41–58 (HVSSFQGSKRGLNSSFET) are compositionally biased toward polar residues. The tract at residues 41 to 152 (HVSSFQGSKR…SRVTTSLEAL (112 aa)) is disordered. The short motif at 49 to 64 (KRGLNSSFETSPKKVK) is the Nuclear localization signal element. S54, S55, S59, S82, S83, and S90 each carry phosphoserine. Residues 88 to 101 (TLSSSERSKGSGSR) are compositionally biased toward low complexity. The segment covering 107-149 (SSPQKTRKSPQVTRGSPQKTSCSPQKTRQSPQTLKRSRVTTSL) has biased composition (polar residues). At S108 the chain carries Phosphoserine; by CDK5. Phosphoserine is present on residues S115 and S122. A Protein kinase domain is found at 166–457 (WKLKSFQTRD…MLRNNLEALL (292 aa)).

It belongs to the protein kinase superfamily. CK1 Ser/Thr protein kinase family. VRK subfamily. Interacts with DUSP3. Interacts with RAN. Interacts with HSP70/HSPA1A. In terms of processing, phosphorylated at Ser-108 by CDK5; leading to protection of the cell against H2O2-induced apoptosis. Post-translationally, ubiquitinated by RNF144A.

Its subcellular location is the nucleus. The protein resides in the cytoplasm. It carries out the reaction L-seryl-[protein] + ATP = O-phospho-L-seryl-[protein] + ADP + H(+). Plays a role in the regulation of the cell cycle by phosphorylating the nuclear envelope protein barrier-to-autointegration factor/BAF that is required for disassembly and reassembly, respectively, of the nuclear envelope during mitosis. Under normal physiological conditions, negatively regulates ERK activity along with VHR/DUSP3 phosphatase in the nucleus, causing timely and transient action of ERK. Stress conditions activate CDK5 which phosphorylates VRK3 to increase VHR phosphatase activity and suppress prolonged ERK activation that causes cell death. For example, upon glutamate induction, promotes nuclear localization of HSP70/HSPA1A to inhibit ERK activation via VHR/DUSP3 phosphatase. This is Serine/threonine-protein kinase VRK3 (VRK3) from Homo sapiens (Human).